The primary structure comprises 87 residues: Small ribosomal subunit protein bS20 (87 aa).

The disordered stretch occupies residues 1-27 (MANIKSAKKRAVTSEKRRKHNASRRSM).

The protein belongs to the bacterial ribosomal protein bS20 family.

Binds directly to 16S ribosomal RNA. The polypeptide is Small ribosomal subunit protein bS20 (Erwinia tasmaniensis (strain DSM 17950 / CFBP 7177 / CIP 109463 / NCPPB 4357 / Et1/99)).